The sequence spans 247 residues: 2,3-bisphosphoglycerate-dependent phosphoglycerate mutase (247 aa).

Residues 8 to 15 (RHGESQWN), 21 to 22 (TG), R60, 87 to 90 (ERHY), K98, 114 to 115 (RR), and 183 to 184 (GN) each bind substrate. Catalysis depends on H9, which acts as the Tele-phosphohistidine intermediate. Residue E87 is the Proton donor/acceptor of the active site.

This sequence belongs to the phosphoglycerate mutase family. BPG-dependent PGAM subfamily.

The enzyme catalyses (2R)-2-phosphoglycerate = (2R)-3-phosphoglycerate. It functions in the pathway carbohydrate degradation; glycolysis; pyruvate from D-glyceraldehyde 3-phosphate: step 3/5. Functionally, catalyzes the interconversion of 2-phosphoglycerate and 3-phosphoglycerate. This chain is 2,3-bisphosphoglycerate-dependent phosphoglycerate mutase, found in Chlorobium phaeovibrioides (strain DSM 265 / 1930) (Prosthecochloris vibrioformis (strain DSM 265)).